The following is a 447-amino-acid chain: Glucose-6-phosphate isomerase (447 aa).

Glu-288 (proton donor) is an active-site residue. Active-site residues include His-309 and Lys-423.

Belongs to the GPI family.

The protein resides in the cytoplasm. The catalysed reaction is alpha-D-glucose 6-phosphate = beta-D-fructose 6-phosphate. It participates in carbohydrate biosynthesis; gluconeogenesis. Its pathway is carbohydrate degradation; glycolysis; D-glyceraldehyde 3-phosphate and glycerone phosphate from D-glucose: step 2/4. Its function is as follows. Catalyzes the reversible isomerization of glucose-6-phosphate to fructose-6-phosphate. The polypeptide is Glucose-6-phosphate isomerase (Lactobacillus johnsonii (strain CNCM I-12250 / La1 / NCC 533)).